The chain runs to 224 residues: Phosphoribosylformylglycinamidine synthase subunit PurQ (224 aa).

Residues 3–224 (FGVVVFPGSN…GLLEKVVALA (222 aa)) form the Glutamine amidotransferase type-1 domain. C86 acts as the Nucleophile in catalysis. Catalysis depends on residues H195 and E197.

In terms of assembly, part of the FGAM synthase complex composed of 1 PurL, 1 PurQ and 2 PurS subunits.

It localises to the cytoplasm. It carries out the reaction N(2)-formyl-N(1)-(5-phospho-beta-D-ribosyl)glycinamide + L-glutamine + ATP + H2O = 2-formamido-N(1)-(5-O-phospho-beta-D-ribosyl)acetamidine + L-glutamate + ADP + phosphate + H(+). The catalysed reaction is L-glutamine + H2O = L-glutamate + NH4(+). Its pathway is purine metabolism; IMP biosynthesis via de novo pathway; 5-amino-1-(5-phospho-D-ribosyl)imidazole from N(2)-formyl-N(1)-(5-phospho-D-ribosyl)glycinamide: step 1/2. In terms of biological role, part of the phosphoribosylformylglycinamidine synthase complex involved in the purines biosynthetic pathway. Catalyzes the ATP-dependent conversion of formylglycinamide ribonucleotide (FGAR) and glutamine to yield formylglycinamidine ribonucleotide (FGAM) and glutamate. The FGAM synthase complex is composed of three subunits. PurQ produces an ammonia molecule by converting glutamine to glutamate. PurL transfers the ammonia molecule to FGAR to form FGAM in an ATP-dependent manner. PurS interacts with PurQ and PurL and is thought to assist in the transfer of the ammonia molecule from PurQ to PurL. This Nostoc sp. (strain PCC 7120 / SAG 25.82 / UTEX 2576) protein is Phosphoribosylformylglycinamidine synthase subunit PurQ.